The primary structure comprises 230 residues: Protein FAM3A (230 aa).

The first 33 residues, Met1–Gly33, serve as a signal peptide directing secretion. 2 disulfides stabilise this stretch: Cys59/Cys87 and Cys65/Cys222. One can recognise a GG-type lectin domain in the interval Glu68 to Arg226.

The protein belongs to the FAM3 family.

The protein resides in the secreted. The sequence is that of Protein FAM3A (FAM3A) from Pongo abelii (Sumatran orangutan).